An 866-amino-acid chain; its full sequence is E3 ubiquitin-protein ligase RNF216 (866 aa).

Disordered regions lie at residues 46 to 117, 131 to 161, and 211 to 240; these read LVTP…NPRS, YTES…SAAL, and EFPG…HPLG. A compositionally biased stretch (acidic residues) spans 55–76; it reads EEEDLDDDVILTEDDSEDDYGE. Residues Leu80, Thr89, and Lys100 each participate in a glycyl lysine isopeptide (Lys-Gly) (interchain with G-Cter in SUMO2) cross-link. Over residues 137–156 the composition is skewed to polar residues; that stretch reads LETQNQSSEDSETELLSNLG. Residues Lys351 and Lys354 each participate in a glycyl lysine isopeptide (Lys-Gly) (interchain with G-Cter in SUMO2) cross-link. Ser419 carries the post-translational modification Phosphoserine. Glycyl lysine isopeptide (Lys-Gly) (interchain with G-Cter in SUMO2) cross-links involve residues Lys425, Lys430, Lys448, Lys459, and Lys485. Residues 475–491 are a coiled coil; it reads VQQEQEFYEQKIKEMAE. A TRIAD supradomain region spans residues 511–728; that stretch reads QLIECRCCYG…SPGAPCQECS (218 aa). Positions 515, 518, 537, 540, 605, and 608 each coordinate Zn(2+). The RING-type 1 zinc-finger motif lies at 515–564; sequence CRCCYGEFPFEELTQCADAHLFCKECLIRYAQEAVFGSGKLELSCMEGSC. The segment at 583–648 adopts an IBR-type zinc-finger fold; sequence YKYYERKAEE…LWKEHNGLTC (66 aa). Lys619 is covalently cross-linked (Glycyl lysine isopeptide (Lys-Gly) (interchain with G-Cter in SUMO2)). 6 residues coordinate Zn(2+): Cys623, Cys628, Cys633, Cys636, His643, and Cys648. Residues Lys658 and Lys666 each participate in a glycyl lysine isopeptide (Lys-Gly) (interchain with G-Cter in SUMO2) cross-link. Residues Cys675 and Cys678 each contribute to the Zn(2+) site. The segment at 675–703 adopts an RING-type 2; atypical zinc-finger fold; it reads CHKCGTGLIKSEGCNRMSCRCGAQMCYLC. Residue Cys688 is part of the active site. Zn(2+) contacts are provided by Cys693, Cys695, Cys700, Cys703, and His716. Ser719 is modified (phosphoserine; by MAPK1). Cys724 lines the Zn(2+) pocket. Residues 737–763 are a coiled coil; that stretch reads TEDDEKLIEEIQKEAEEEQKRKNGENT. Glycyl lysine isopeptide (Lys-Gly) (interchain with G-Cter in SUMO2) cross-links involve residues Lys765 and Lys773.

In terms of assembly, interacts with UBE2L3 and to some extent with UBE2L6. Interacts with TRAF3, TLR3, TLR4, TLR5 and TLR9. Isoform 3/ZIN binds RIPK1. As to quaternary structure, (Microbial infection) Isoform 3/ZIN binds RIPK1 and HIV Vif. In terms of processing, auto-ubiquitinated. Post-translationally, phosphorylation at Ser-719 enhances acceptor ubiquitin binding and chain-type specificity towards 'Lys-63' di-ubiquitin but not di-ubiquitin with other linkage types. Ubiquitous, with the highest levels of expression in testis and peripheral blood leukocytes.

The protein localises to the cytoplasm. It is found in the cytoplasmic vesicle. The protein resides in the clathrin-coated vesicle. The enzyme catalyses S-ubiquitinyl-[E2 ubiquitin-conjugating enzyme]-L-cysteine + [acceptor protein]-L-lysine = [E2 ubiquitin-conjugating enzyme]-L-cysteine + N(6)-ubiquitinyl-[acceptor protein]-L-lysine.. The protein operates within protein modification; protein ubiquitination. With respect to regulation, allosterically activated by 'Lys-63'-linked di-ubiquitin. E3 ubiquitin ligase which accepts ubiquitin from specific E2 ubiquitin-conjugating enzymes, and then transfers it to substrates promoting their ubiquitination. Plays a role in the regulation of antiviral responses by promoting the degradation of TRAF3, TLR4 and TLR9. In turn, down-regulates NF-kappa-B and IRF3 activation as well as beta interferon production. Also participates in the regulation of autophagy by ubiquitinating BECN1 leading to its degradation and autophagy inhibition. Plays a role in ARC-dependent synaptic plasticity by mediating ARC ubiquitination resulting in its rapid proteasomal degradation. Plays aso an essential role in spermatogenesis and male fertility. Mechanistically, regulates meiosis by promoting the degradation of PRKACB through the ubiquitin-mediated lysosome pathway. Modulates the gonadotropin-releasing hormone signal pathway by affecting the stability of STAU2 that is required for the microtubule-dependent transport of neuronal RNA from the cell body to the dendrite. Functionally, inhibits TNF and IL-1 mediated activation of NF-kappa-B. Promotes TNF and RIP mediated apoptosis. This is E3 ubiquitin-protein ligase RNF216 (RNF216) from Homo sapiens (Human).